The sequence spans 620 residues: DNA mismatch repair protein MutL (620 aa).

The segment at Ser332 to His402 is disordered. Over residues Ser352 to Ser365 the composition is skewed to low complexity. The segment covering Pro378 to Arg394 has biased composition (polar residues).

It belongs to the DNA mismatch repair MutL/HexB family.

This protein is involved in the repair of mismatches in DNA. It is required for dam-dependent methyl-directed DNA mismatch repair. May act as a 'molecular matchmaker', a protein that promotes the formation of a stable complex between two or more DNA-binding proteins in an ATP-dependent manner without itself being part of a final effector complex. This Shewanella piezotolerans (strain WP3 / JCM 13877) protein is DNA mismatch repair protein MutL.